Here is an 89-residue protein sequence, read N- to C-terminus: Co-chaperonin GroES (89 aa).

The protein belongs to the GroES chaperonin family. In terms of assembly, heptamer of 7 subunits arranged in a ring. Interacts with the chaperonin GroEL.

Its subcellular location is the cytoplasm. Together with the chaperonin GroEL, plays an essential role in assisting protein folding. The GroEL-GroES system forms a nano-cage that allows encapsulation of the non-native substrate proteins and provides a physical environment optimized to promote and accelerate protein folding. GroES binds to the apical surface of the GroEL ring, thereby capping the opening of the GroEL channel. The protein is Co-chaperonin GroES of Porphyromonas gingivalis (strain ATCC 33277 / DSM 20709 / CIP 103683 / JCM 12257 / NCTC 11834 / 2561).